The sequence spans 1145 residues: Protein sumv-2 (1145 aa).

A compositionally biased stretch (basic residues) spans 1 to 13; sequence MKPGRKSLPKKNR. Disordered regions lie at residues 1–310, 429–464, 999–1025, 1040–1059, and 1073–1145; these read MKPG…APPA, QSRTKLKGSSKEREETPAFDEESPIGGDEKRQQKAR, HSASSSAAPSPVGASGRRATVTGAGSE, QIAAPSISGPPPPAPSPRTE, and ITTG…ISLI. Polar residues predominate over residues 14 to 34; the sequence is ASNITEKMPTTSTEAQSSSSK. Basic and acidic residues-rich tracts occupy residues 73–104 and 216–225; these read KTTEEVKSPRKSARKSELKKPEPEEKAKEPRK and VPEKKPKIED. A compositionally biased stretch (low complexity) spans 226 to 248; the sequence is APTTSSPKKSTPTSAPPTRASAR. The segment covering 455–464 has biased composition (basic and acidic residues); that stretch reads GDEKRQQKAR. Residues 999–1013 show a composition bias toward low complexity; the sequence is HSASSSAAPSPVGAS. The segment covering 1091-1102 has biased composition (basic and acidic residues); the sequence is VIERGDFRDHRP. The span at 1121–1136 shows a compositional bias: pro residues; sequence QQPPLPSPAPPPPRGP.

Influences the activity of genes involved in vulval development. The polypeptide is Protein sumv-2 (Caenorhabditis elegans).